Consider the following 431-residue polypeptide: Phosphomethylpyrimidine synthase (431 aa).

Residues N66, M95, Y124, H163, 185 to 187 (SRG), 226 to 229 (DGLR), and E265 contribute to the substrate site. H269 is a binding site for Zn(2+). Y292 is a substrate binding site. H333 provides a ligand contact to Zn(2+). C408, C411, and C415 together coordinate [4Fe-4S] cluster.

The protein belongs to the ThiC family. It depends on [4Fe-4S] cluster as a cofactor.

The enzyme catalyses 5-amino-1-(5-phospho-beta-D-ribosyl)imidazole + S-adenosyl-L-methionine = 4-amino-2-methyl-5-(phosphooxymethyl)pyrimidine + CO + 5'-deoxyadenosine + formate + L-methionine + 3 H(+). It functions in the pathway cofactor biosynthesis; thiamine diphosphate biosynthesis. In terms of biological role, catalyzes the synthesis of the hydroxymethylpyrimidine phosphate (HMP-P) moiety of thiamine from aminoimidazole ribotide (AIR) in a radical S-adenosyl-L-methionine (SAM)-dependent reaction. The chain is Phosphomethylpyrimidine synthase from Dehalococcoides mccartyi (strain CBDB1).